A 469-amino-acid polypeptide reads, in one-letter code: MDNRNTQMYTEEEKTVNPFLPSTPGPKKAKGGGEAVETHPAPGPLPPPEVRDIGERREPDRAQQQPQKPAVAAGTQSLGNFRQGFMKCLLEVEKMEASHRRASKARSQTAQKSPRTLTPVPTSAPSLPQTPASVPASGPSWARLPAPGPEPAPMGAPVPTSMPCPVLLGPALDLGWRRMELLHQSSERTLSYAKARQEPEEQSLQKLYQNREKSEEQLTLKQEEAFRSYFEIFNGPGEVDAQSLKNILLLMGFSVTLAQVEDALMSADVNGDGRVDFKDFLAVMTDTRRFFCSVEQNALSDMAPHNPHTLLFEILSLLVEMLALPEAVLEEITNYYQKKLKEGTCKAQEMEAAVGRLRLQKLPYNPQQEESSEVPERKVLSILSRLKQQNYAPNLQSPYAQVPCILLCPQLDKKMVRRQPSNHYALDQCTPPGLDPDIRSPFFQSGSQGNREHNSDSRKWLSSVPARTH.

Disordered stretches follow at residues Met1 to Gln76 and His99 to Pro157. Positions Glu49–Arg61 are enriched in basic and acidic residues. A compositionally biased stretch (low complexity) spans Ala62–Ala73. Residues Ala105 to Ala132 show a composition bias toward polar residues. A compositionally biased stretch (pro residues) spans Ala146–Pro157. A coiled-coil region spans residues Glu198 to Ala225. The 36-residue stretch at Val255 to Phe290 folds into the EF-hand domain. The Ca(2+) site is built by Asp268, Asn270, Asp272, Arg274, and Asp279. Residues Tyr424–His469 are disordered. Basic and acidic residues predominate over residues Asn450–Lys459.

Its function is as follows. Involved in the differentiation of haploid spermatids. The polypeptide is Spermatogenesis-associated protein 21 (SPATA21) (Homo sapiens (Human)).